We begin with the raw amino-acid sequence, 520 residues long: Succinyl-CoA:3-ketoacid coenzyme A transferase 2B, mitochondrial (520 aa).

The N-terminal 39 residues, 1–39, are a transit peptide targeting the mitochondrion; it reads MAALRLLAWALPRGVSALRPRPALPHRLIRRYVSDRSGS. The segment at 280–299 is disordered; that stretch reads ERLTTRDSKPAPGSKDNDPS. E342 serves as the catalytic 5-glutamyl coenzyme A thioester intermediate.

This sequence belongs to the 3-oxoacid CoA-transferase family. As to quaternary structure, homodimer. As to expression, testis specific. Expressed in late spermatids. Accumulates during spermiogenesis. Also detected in the midpiece of spermatozoa.

The protein localises to the mitochondrion. It catalyses the reaction a 3-oxo acid + succinyl-CoA = a 3-oxoacyl-CoA + succinate. It participates in ketone metabolism; succinyl-CoA degradation; acetoacetyl-CoA from succinyl-CoA: step 1/1. Its function is as follows. Key enzyme for ketone body catabolism. Transfers the CoA moiety from succinate to acetoacetate. Formation of the enzyme-CoA intermediate proceeds via an unstable anhydride species formed between the carboxylate groups of the enzyme and substrate. Probably play and important roles in the energy metabolism of spermatozoa. In Mus musculus (Mouse), this protein is Succinyl-CoA:3-ketoacid coenzyme A transferase 2B, mitochondrial (Oxct2b).